The chain runs to 149 residues: UPF0178 protein HEAR0259 (149 aa).

This sequence belongs to the UPF0178 family.

The chain is UPF0178 protein HEAR0259 from Herminiimonas arsenicoxydans.